The sequence spans 146 residues: Hemoglobin subunit beta (146 aa).

Residues 2–146 (HWSAEEKQLI…VAHALARKYH (145 aa)) form the Globin domain. Heme b is bound by residues histidine 63 and histidine 92.

The protein belongs to the globin family. Heterotetramer of two alpha chains and two beta chains. As to expression, red blood cells.

Functionally, involved in oxygen transport from the lung to the various peripheral tissues. This is Hemoglobin subunit beta (HBB) from Aptenodytes forsteri (Emperor penguin).